Consider the following 288-residue polypeptide: Proline iminopeptidase (288 aa).

Residues 27–274 (PVIVLHGGPG…SAHMPYIEEP (248 aa)) form the AB hydrolase-1 domain. The active-site Nucleophile is Ser101. Asp240 is an active-site residue. The Proton donor role is filled by His267.

Belongs to the peptidase S33 family. As to quaternary structure, monomer.

Its subcellular location is the cytoplasm. The enzyme catalyses Release of N-terminal proline from a peptide.. Its activity is regulated as follows. Completely inhibited by p-chloromercuribenzoate (PCMB) and heavy metal salts. Partially inhibited by proline and proline derivatives with proline as the amino terminus. Enzyme inactivated by PCMB is reactivated by incubation with 2-mercaptoethanol. Releases the N-terminal proline from various substrates including at least dipeptides Pro-Pro, Pro-Gln, Pro-Trp and Pro-Tyr. Also acts on amides (Pro-beta NA) and oligopeptides including Pro-Leu-GlyNH2, Pro-Leu-Gly, Pro-Phe-Gly-Lys, Pro-Pro-Ala-OBut and Pro-Pro-Gly-(Pro-Pro-Gly)(4). Higher activity toward small peptides (up to three residues), but very low activity for longer peptides. Has no activity against p-nitrophenyl acetate, poly_L-proline, Met-Pro or amino acyl amides other than Pro-betaNA (Pyr-betaNA, Phe-betaNA, Cys-betaNA, Met-betaNA, Leu-betaNA, Ala-betaNA and Z-Gly-Pro-betaNA). The protein is Proline iminopeptidase (pip) of Heyndrickxia coagulans (Weizmannia coagulans).